The sequence spans 3433 residues: Genome polyprotein (3433 aa).

The segment at 2–15 (SKKPGGPGKSRAVN) is interaction with host EXOC1. The Cytoplasmic portion of the chain corresponds to 2–105 (SKKPGGPGKS…NRRSSKQKKR (104 aa)). The segment at 37 to 72 (LIDGRGPTRFVLALLAFFRFTAIAPTRAVLDRWRSV) is hydrophobic; homodimerization of capsid protein C. Residues 106-123 (GGKTGIAFMIGLIAGVGA) constitute a propeptide, ER anchor for the capsid protein C, removed in mature form by serine protease NS3. The helical transmembrane segment at 106–126 (GGKTGIAFMIGLIAGVGAVTL) threads the bilayer. The Extracellular segment spans residues 127–248 (SNFQGKVMMT…KATRYLVKTE (122 aa)). A glycan (N-linked (GlcNAc...) asparagine; by host) is linked at N138. A helical membrane pass occupies residues 249–269 (SWILRNPGYALVAAVIGWMLG). Over 270-273 (SNTM) the chain is Cytoplasmic. The helical transmembrane segment at 274-290 (QRVVFAVLLLLVAPAYS) threads the bilayer. The Extracellular portion of the chain corresponds to 291–743 (FNCLGMSNRD…QVFGGAFRSL (453 aa)). 4 cysteine pairs are disulfide-bonded: C293–C320, C350–C406, C364–C395, and C382–C411. The fusion peptide stretch occupies residues 388–401 (DRGWGNGCGLFGKG). The N-linked (GlcNAc...) asparagine; by host glycan is linked to N444. Disulfide bonds link C480–C578 and C595–C626. The helical transmembrane segment at 744-764 (FGGMSWITQGLLGALLLWMGI) threads the bilayer. The Cytoplasmic segment spans residues 765–770 (NARDRS). The chain crosses the membrane as a helical span at residues 771 to 791 (IALTFLAVGGVLLFLSVNVHA). Over 792-1216 (DTGCAIDISR…AFAESNSGGD (425 aa)) the chain is Extracellular. 2 disulfide bridges follow: C795–C806 and C846–C934. 3 N-linked (GlcNAc...) asparagine; by host glycosylation sites follow: N921, N966, and N998. Intrachain disulfides connect C970/C1014, C1071/C1120, C1082/C1103, and C1104/C1107. Residues 1217 to 1237 (VVHLALMATFKIQPVFMVASF) form a helical membrane-spanning segment. Residues 1238–1247 (LKARWTNQEN) are Cytoplasmic-facing. A helical transmembrane segment spans residues 1248–1268 (ILLMLAAAFFQMAYYDARQIL). At 1269-1288 (LWEMPDVLNSLAVAWMILRA) the chain is on the lumenal side. A helical membrane pass occupies residues 1289 to 1309 (ITFTTTSNVVVPLLALLTPGL). Residues 1310–1316 (RCLNLDV) are Cytoplasmic-facing. A helical transmembrane segment spans residues 1317–1335 (YRILLLMVGIGSLIREKRS). The Lumenal segment spans residues 1336–1345 (AAAKKKGASL). A helical transmembrane segment spans residues 1346-1366 (LCLALASTGFFNPMILAAGLV). Residues 1367-1375 (ACDPNRKRG) lie on the Cytoplasmic side of the membrane. Residues 1376–1396 (WPATEVMTAVGLMFAIVGGLA) form a helical membrane-spanning segment. Residues 1397–1399 (ELD) lie on the Lumenal side of the membrane. A helical transmembrane segment spans residues 1400 to 1420 (IDSMAIPMTIAGLMFAAFVIS). The Cytoplasmic portion of the chain corresponds to 1421–1477 (GKSTDMWIERTADISWEGDAEITGSSERVDVRLDDDGNFQLMNDPGAPWKIWMLRMA). Residues 1428–1467 (IERTADISWEGDAEITGSSERVDVRLDDDGNFQLMNDPGA) are interacts with and activates NS3 protease. Positions 1478–1498 (CLAISAYTPWAILPSVVGFWI) form an intramembrane region, helical. Topologically, residues 1499 to 2174 (TLQYTKRGGV…RMALEELPDA (676 aa)) are cytoplasmic. Positions 1506 to 1683 (GGVLWDTPSP…ERMDEPVPAG (178 aa)) constitute a Peptidase S7 domain. Catalysis depends on charge relay system; for serine protease NS3 activity residues H1556, D1580, and S1640. The Helicase ATP-binding domain occupies 1686-1842 (PEMLRKKQIT…ESNAPISDLQ (157 aa)). Positions 1690 to 1693 (RKKQ) are important for RNA-binding. ATP is bound at residue 1699–1706 (LHPGAGKT). A DEAH box motif is present at residues 1790-1793 (DEAH). The Helicase C-terminal domain maps to 1853 to 2018 (GYEWITEYIG…GLIAQFYQPE (166 aa)). K1894 carries the post-translational modification N6-acetyllysine; by host. The tract at residues 2169–2173 (EELPD) is regulates the ATPase activity of NS3 helicase. A helical transmembrane segment spans residues 2175–2195 (LQTIALIALLSVMTMGVFFLL). Topologically, residues 2196–2200 (MQRKG) are lumenal. An intramembrane region (helical) is located at residues 2201–2221 (IGKIGLGGVVLGAATFFCWMA). Position 2222 (E2222) is a topological domain, lumenal. Residues 2223–2243 (VPGTKIAGMLLLSLLLMIVLI) traverse the membrane as a helical segment. At 2244–2258 (PEPEKQRSQTDNQLA) the chain is on the cytoplasmic side. Residues 2259-2273 (VFLICVLTLVGAVAA) form a helical membrane-spanning segment. At 2274–2312 (NEMGWLDKTKSDISGLFGQRIETKENFSIGEFLLDLRPA) the chain is on the lumenal side. Positions 2313–2333 (TAWSLYAVTTAVLTPLLKHLI) form an intramembrane region, helical. At 2334–2380 (TSDYITTSLTSINVQASALFTLARGFPFVDVGVSALLLAAGCWGQVT) the chain is on the lumenal side. The chain crosses the membrane as a helical span at residues 2381 to 2401 (LTVTVTSATLLFCHYAYMVPG). Topologically, residues 2402 to 2444 (WQAEAMRSAQRRTAAGIMKNAVVDGIVATDVPELERTTPIMQK) are cytoplasmic. The helical transmembrane segment at 2445–2465 (KVGQVMLILVSLAALVVNPSV) threads the bilayer. Residues 2466 to 2470 (KTVRE) lie on the Lumenal side of the membrane. The helical transmembrane segment at 2471–2491 (AGILITAAAVTLWENGASSVW) threads the bilayer. Residues 2492–3433 (NATTAIGLCH…DTTLVEDTVL (942 aa)) lie on the Cytoplasmic side of the membrane. The mRNA cap 0-1 NS5-type MT domain occupies 2529–2794 (GGAKGRTLGE…DVNLGSGTRA (266 aa)). S2584 contacts S-adenosyl-L-methionine. At S2584 the chain carries Phosphoserine. K2589 functions as the For 2'-O-MTase activity in the catalytic mechanism. Positions 2614, 2615, 2632, 2633, 2659, and 2660 each coordinate S-adenosyl-L-methionine. The active-site For 2'-O-MTase activity is the D2674. An S-adenosyl-L-methionine-binding site is contributed by I2675. Residues K2710 and E2746 each act as for 2'-O-MTase activity in the active site. Y2748 contributes to the S-adenosyl-L-methionine binding site. Positions 2917-2919 (REK) match the Nuclear localization signal motif. Residues E2968, H2972, C2977, and C2980 each coordinate Zn(2+). The region spanning 3058-3210 (GRIYADDTAG…KPLDDRFATS (153 aa)) is the RdRp catalytic domain. Zn(2+) contacts are provided by H3245, C3261, and C3380. The PDZ-binding signature appears at 3431–3433 (TVL).

It in the N-terminal section; belongs to the class I-like SAM-binding methyltransferase superfamily. mRNA cap 0-1 NS5-type methyltransferase family. Homodimer; further assembles as a homotetramer. Interacts (via N-terminus) with host EXOC1 (via C-terminus); this interaction results in EXOC1 degradation through the proteasome degradation pathway. In terms of assembly, forms heterodimers with envelope protein E in the endoplasmic reticulum and Golgi. As to quaternary structure, homodimer; in the endoplasmic reticulum and Golgi. Interacts with protein prM. Interacts with non-structural protein 1. Homodimer; Homohexamer when secreted. Interacts with envelope protein E. NS1 interacts with NS4B. Interacts with host complement protein CFH; this interaction leads to the degradation of C3. In terms of assembly, interacts (via N-terminus) with serine protease NS3. As to quaternary structure, forms a heterodimer with serine protease NS3. May form homooligomers. Forms a heterodimer with NS2B. Interacts with non-structural protein 2A (via N-terminus). Interacts with NS4B. Interacts with unphosphorylated RNA-directed RNA polymerase NS5; this interaction stimulates RNA-directed RNA polymerase NS5 guanylyltransferase activity. In terms of assembly, interacts with Serine protease/Helicase NS3. Interacts with NS1. As to quaternary structure, homodimer. Interacts with host STAT2; this interaction inhibits the phosphorylation of the latter, and, when all viral proteins are present (polyprotein), targets STAT2 for degradation. Interacts with serine protease NS3. In terms of processing, specific enzymatic cleavages in vivo yield mature proteins. Cleavages in the lumen of endoplasmic reticulum are performed by host signal peptidase, whereas cleavages in the cytoplasmic side are performed by serine protease NS3. Signal cleavage at the 2K-4B site requires a prior NS3 protease-mediated cleavage at the 4A-2K site. Cleaved in post-Golgi vesicles by a host furin, releasing the mature small envelope protein M, and peptide pr. This cleavage is incomplete as up to 30% of viral particles still carry uncleaved prM. Post-translationally, N-glycosylated. In terms of processing, N-glycosylated. The excreted form is glycosylated and this is required for efficient secretion of the protein from infected cells. Acetylated by host KAT5. Acetylation modulates NS3 RNA-binding and unwinding activities and plays an important positive role for viral replication. Post-translationally, phosphorylated on serines residues. This phosphorylation may trigger NS5 nuclear localization.

It localises to the virion. It is found in the host nucleus. The protein localises to the host cytoplasm. Its subcellular location is the host perinuclear region. The protein resides in the secreted. It localises to the virion membrane. It is found in the host endoplasmic reticulum membrane. The catalysed reaction is Selective hydrolysis of -Xaa-Xaa-|-Yaa- bonds in which each of the Xaa can be either Arg or Lys and Yaa can be either Ser or Ala.. The enzyme catalyses RNA(n) + a ribonucleoside 5'-triphosphate = RNA(n+1) + diphosphate. It carries out the reaction a ribonucleoside 5'-triphosphate + H2O = a ribonucleoside 5'-diphosphate + phosphate + H(+). It catalyses the reaction ATP + H2O = ADP + phosphate + H(+). The catalysed reaction is a 5'-end (5'-triphosphoguanosine)-ribonucleoside in mRNA + S-adenosyl-L-methionine = a 5'-end (N(7)-methyl 5'-triphosphoguanosine)-ribonucleoside in mRNA + S-adenosyl-L-homocysteine. The enzyme catalyses a 5'-end (N(7)-methyl 5'-triphosphoguanosine)-ribonucleoside in mRNA + S-adenosyl-L-methionine = a 5'-end (N(7)-methyl 5'-triphosphoguanosine)-(2'-O-methyl-ribonucleoside) in mRNA + S-adenosyl-L-homocysteine + H(+). In terms of biological role, plays a role in virus budding by binding to the cell membrane and gathering the viral RNA into a nucleocapsid that forms the core of a mature virus particle. During virus entry, may induce genome penetration into the host cytoplasm after hemifusion induced by the surface proteins. Can migrate to the cell nucleus where it modulates host functions. Overcomes the anti-viral effects of host EXOC1 by sequestering and degrading the latter through the proteasome degradation pathway. Inhibits RNA silencing by interfering with host Dicer. Its function is as follows. Prevents premature fusion activity of envelope proteins in trans-Golgi by binding to envelope protein E at pH6.0. After virion release in extracellular space, gets dissociated from E dimers. Functionally, acts as a chaperone for envelope protein E during intracellular virion assembly by masking and inactivating envelope protein E fusion peptide. prM is the only viral peptide matured by host furin in the trans-Golgi network probably to avoid catastrophic activation of the viral fusion activity in acidic Golgi compartment prior to virion release. prM-E cleavage is inefficient, and many virions are only partially matured. These uncleaved prM would play a role in immune evasion. In terms of biological role, may play a role in virus budding. Exerts cytotoxic effects by activating a mitochondrial apoptotic pathway through M ectodomain. May display a viroporin activity. Binds to host cell surface receptor and mediates fusion between viral and cellular membranes. Envelope protein is synthesized in the endoplasmic reticulum in the form of heterodimer with protein prM. They play a role in virion budding in the ER, and the newly formed immature particle is covered with 60 spikes composed of heterodimer between precursor prM and envelope protein E. The virion is transported to the Golgi apparatus where the low pH causes dissociation of PrM-E heterodimers and formation of E homodimers. prM-E cleavage is inefficient, and many virions are only partially matured. These uncleaved prM would play a role in immune evasion. Its function is as follows. Involved in immune evasion, pathogenesis and viral replication. Once cleaved off the polyprotein, is targeted to three destinations: the viral replication cycle, the plasma membrane and the extracellular compartment. Essential for viral replication. Required for formation of the replication complex and recruitment of other non-structural proteins to the ER-derived membrane structures. Excreted as a hexameric lipoparticle that plays a role against host immune response. Antagonizing the complement function. Binds to the host macrophages and dendritic cells. Inhibits signal transduction originating from Toll-like receptor 3 (TLR3). Functionally, component of the viral RNA replication complex that functions in virion assembly and antagonizes the host alpha/beta interferon antiviral response. Inhibits STAT2 translocation in the nucleus after IFN-alpha treatment. In terms of biological role, required cofactor for the serine protease function of NS3. May have membrane-destabilizing activity and form viroporins. Inhibits STAT2 translocation in the nucleus after IFN-alpha treatment. Displays three enzymatic activities: serine protease, NTPase and RNA helicase. NS3 serine protease, in association with NS2B, performs its autocleavage and cleaves the polyprotein at dibasic sites in the cytoplasm: C-prM, NS2A-NS2B, NS2B-NS3, NS3-NS4A, NS4A-2K and NS4B-NS5. NS3 RNA helicase binds RNA and unwinds dsRNA in the 3' to 5' direction. NS3 supports the separation of RNA daughter and template strands during viral replication. The helicase part is involved in the inhibition of phosphorylation of host STAT1, and thereby inhibition of host type-I IFN signaling. In addition, NS3 assists the initiation of replication by unwinding the RNA secondary structure in the 3' non-translated region (NTR). Inhibits STAT2 translocation in the nucleus after IFN-alpha treatment. Its function is as follows. Regulates the ATPase activity of the NS3 helicase activity. NS4A allows NS3 helicase to conserve energy during unwinding. Induces host ER membrane rearrangements to provide a compartment where viral replication can take part. Inhibits STAT2 translocation in the nucleus after IFN-alpha treatment. Functionally, functions as a signal peptide for NS4B and is required for the interferon antagonism activity of the latter. In terms of biological role, induces the formation of ER-derived membrane vesicles where the viral replication takes place. Inhibits interferon (IFN)-induced host STAT1 phosphorylation and nuclear translocation, thereby preventing the establishment of cellular antiviral state by blocking the IFN-alpha/beta pathway. Inhibits STAT2 translocation in the nucleus after IFN-alpha treatment. Replicates the viral (+) and (-) genome, and performs the capping of genomes in the cytoplasm. NS5 methylates viral RNA cap at guanine N-7 and ribose 2'-O positions. Besides its role in genome replication, also prevents the establishment of cellular antiviral state by blocking the interferon-alpha/beta (IFN-alpha/beta) signaling pathway. Inhibits host JAK1 and TYK2 phosphorylation, thereby preventing activation of JAK-STAT signaling pathway. May transcriptionally regulate host genes involved in antiviral response when localized in the nucleus. This chain is Genome polyprotein, found in Ciconiiformes (storks and others).